We begin with the raw amino-acid sequence, 367 residues long: Peptide chain release factor 2 (367 aa).

The residue at position 250 (Gln250) is an N5-methylglutamine.

Belongs to the prokaryotic/mitochondrial release factor family. In terms of processing, methylated by PrmC. Methylation increases the termination efficiency of RF2.

It is found in the cytoplasm. In terms of biological role, peptide chain release factor 2 directs the termination of translation in response to the peptide chain termination codons UGA and UAA. The chain is Peptide chain release factor 2 from Mycobacteroides abscessus (strain ATCC 19977 / DSM 44196 / CCUG 20993 / CIP 104536 / JCM 13569 / NCTC 13031 / TMC 1543 / L948) (Mycobacterium abscessus).